Consider the following 191-residue polypeptide: Cell division protein SepF (191 aa).

The span at 151-165 shows a compositional bias: low complexity; the sequence is SSSPEEASPSSVPTE. The segment at 151 to 191 is disordered; sequence SSSPEEASPSSVPTENTPQYSLGKNTTPEPAWGNSKLSAYS. Residues 166–178 are compositionally biased toward polar residues; sequence NTPQYSLGKNTTP.

The protein belongs to the SepF family. As to quaternary structure, homodimer. Interacts with FtsZ.

It localises to the cytoplasm. In terms of biological role, cell division protein that is part of the divisome complex and is recruited early to the Z-ring. Probably stimulates Z-ring formation, perhaps through the cross-linking of FtsZ protofilaments. Its function overlaps with FtsA. The sequence is that of Cell division protein SepF from Prochlorococcus marinus (strain MIT 9215).